A 388-amino-acid polypeptide reads, in one-letter code: S-adenosylmethionine synthase (388 aa).

ATP is bound at residue H17. Residue D19 participates in Mg(2+) binding. K(+) is bound at residue E45. E58 and Q106 together coordinate L-methionine. The interval 106-116 (QSAHISQGVDR) is flexible loop. ATP is bound by residues 166-168 (DAK), D241, 247-248 (RK), A264, and K268. D241 is an L-methionine binding site. K272 is an L-methionine binding site.

It belongs to the AdoMet synthase family. Homotetramer; dimer of dimers. It depends on Mg(2+) as a cofactor. K(+) is required as a cofactor.

It localises to the cytoplasm. The enzyme catalyses L-methionine + ATP + H2O = S-adenosyl-L-methionine + phosphate + diphosphate. It functions in the pathway amino-acid biosynthesis; S-adenosyl-L-methionine biosynthesis; S-adenosyl-L-methionine from L-methionine: step 1/1. Its function is as follows. Catalyzes the formation of S-adenosylmethionine (AdoMet) from methionine and ATP. The overall synthetic reaction is composed of two sequential steps, AdoMet formation and the subsequent tripolyphosphate hydrolysis which occurs prior to release of AdoMet from the enzyme. This chain is S-adenosylmethionine synthase, found in Paracoccus denitrificans (strain Pd 1222).